A 536-amino-acid chain; its full sequence is Cytochrome P450 monooxygenase pbrC (536 aa).

A helical membrane pass occupies residues V20–I39. Residue C479 coordinates heme.

It belongs to the cytochrome P450 family. Requires heme as cofactor.

Its subcellular location is the membrane. It functions in the pathway secondary metabolite biosynthesis; terpenoid biosynthesis. In terms of biological role, cytochrome P450 monooxygenase; part of the gene cluster that mediates the biosynthesis of the sesquiterpenoid aspterric acid (AA), an inhibitor of dihydroxy-acid dehydratase (DHAD) effective as an herbicide. PbrC catalyzes the third and last step within the pathway and converts the alpha-epoxy carboxylate intermediate produced by the cytochrome P450 monooxygenase pbrB from (-)daucane into the tricyclic aspterric acid. In Penicillium brasilianum, this protein is Cytochrome P450 monooxygenase pbrC.